The primary structure comprises 86 residues: Large ribosomal subunit protein bL27 (86 aa).

A compositionally biased stretch (gly residues) spans 1–10; that stretch reads MAQKKGGGST. The tract at residues 1-20 is disordered; that stretch reads MAQKKGGGSTRNGRDSESKR.

It belongs to the bacterial ribosomal protein bL27 family.

In Bordetella parapertussis (strain 12822 / ATCC BAA-587 / NCTC 13253), this protein is Large ribosomal subunit protein bL27.